Reading from the N-terminus, the 116-residue chain is Protein RALF-like 33 (116 aa).

Positions 1–23 (MRGLSTKPVAIIIAILTVHFLFA) are cleaved as a signal peptide. A propeptide spans 24 to 67 (AVTSQSSGDFVPIESKCNGTIAECSLSTAEEEFEMDSEINRRIL) (removed in mature form). An N-linked (GlcNAc...) asparagine glycan is attached at Asn-41. 2 disulfides stabilise this stretch: Cys-85/Cys-95 and Cys-108/Cys-114.

Belongs to the plant rapid alkalinization factor (RALF) family. Proteolytically cleaved, probably by S1P, a subtilisin-like serine protease (subtilase). Expressed in roots, stems, leaves and plants.

It localises to the secreted. Cell signaling peptide that may regulate plant stress, growth, and development. Mediates a rapid alkalinization of extracellular space by mediating a transient increase in the cytoplasmic Ca(2+) concentration leading to a calcium-dependent signaling events through a cell surface receptor and a concomitant activation of some intracellular mitogen-activated protein kinases. In Arabidopsis thaliana (Mouse-ear cress), this protein is Protein RALF-like 33 (RALFL33).